A 132-amino-acid chain; its full sequence is MEKVDEFLEYIKVSILDKSIVDTSLILSDRDGFVLGKIIDKSSSADNVIDNSLISTFSSATDQASKLHAGNNKSIVSFFEDRIIVHINVSNVILSIITDTESNVGLILGSQDDLIRSLTSLSNSIQSDIQDM.

This sequence belongs to the LAMTOR3 family. As to quaternary structure, part of the Ragulator complex.

Its function is as follows. Regulator of the TOR pathway, a signaling cascade that promotes cell growth in response to growth factors, energy levels, and amino acids. May activate the TOR signaling cascade in response to amino acids. This chain is Ragulator complex protein LAMTOR3 homolog, found in Dictyostelium discoideum (Social amoeba).